Reading from the N-terminus, the 211-residue chain is Protein-methionine-sulfoxide reductase heme-binding subunit MsrQ (211 aa).

Transmembrane regions (helical) follow at residues 10 to 30 (WLKV…VWAI), 54 to 74 (FLLA…PLLI), 82 to 102 (LWCF…ELGV), 116 to 136 (PYLT…FTST), 153 to 173 (FVYL…KIIS), and 178 to 198 (IYAG…LSLF).

It belongs to the MsrQ family. As to quaternary structure, heterodimer of a catalytic subunit (MsrP) and a heme-binding subunit (MsrQ). FMN serves as cofactor. It depends on heme b as a cofactor.

The protein localises to the cell inner membrane. In terms of biological role, part of the MsrPQ system that repairs oxidized periplasmic proteins containing methionine sulfoxide residues (Met-O), using respiratory chain electrons. Thus protects these proteins from oxidative-stress damage caused by reactive species of oxygen and chlorine generated by the host defense mechanisms. MsrPQ is essential for the maintenance of envelope integrity under bleach stress, rescuing a wide series of structurally unrelated periplasmic proteins from methionine oxidation, including the primary periplasmic chaperone SurA and the lipoprotein Pal. MsrQ provides electrons for reduction to the reductase catalytic subunit MsrP, using the quinone pool of the respiratory chain. The sequence is that of Protein-methionine-sulfoxide reductase heme-binding subunit MsrQ from Escherichia coli O6:H1 (strain CFT073 / ATCC 700928 / UPEC).